Consider the following 616-residue polypeptide: Centrosomal protein of 70 kDa (616 aa).

2 coiled-coil regions span residues 96–210 and 273–335; these read EETT…EEER and NYKG…NIKL. Residues 502–535 form a TPR repeat; the sequence is NGVFPRMNEVYTRLGEMNNAVRNLQELLELDSSS.

As to quaternary structure, directly interacts with tubulin-gamma; this interaction determines centrosomal localization.

It localises to the cytoplasm. The protein localises to the cytoskeleton. The protein resides in the microtubule organizing center. It is found in the centrosome. Functionally, plays a role in the organization of both preexisting and nascent microtubules in interphase cells. During mitosis, required for the organization and orientation of the mitotic spindle. The polypeptide is Centrosomal protein of 70 kDa (Cep70) (Mus musculus (Mouse)).